The following is a 345-amino-acid chain: D-erythrose-4-phosphate dehydrogenase (345 aa).

11-12 (RI) is a binding site for NAD(+). Residues 158-160 (SCT), Arg204, 217-218 (TK), and Arg240 each bind substrate. The active-site Nucleophile is Cys159. An NAD(+)-binding site is contributed by Asn322.

Belongs to the glyceraldehyde-3-phosphate dehydrogenase family. Epd subfamily. As to quaternary structure, homotetramer.

The protein localises to the cytoplasm. It carries out the reaction D-erythrose 4-phosphate + NAD(+) + H2O = 4-phospho-D-erythronate + NADH + 2 H(+). The protein operates within cofactor biosynthesis; pyridoxine 5'-phosphate biosynthesis; pyridoxine 5'-phosphate from D-erythrose 4-phosphate: step 1/5. Catalyzes the NAD-dependent conversion of D-erythrose 4-phosphate to 4-phosphoerythronate. The polypeptide is D-erythrose-4-phosphate dehydrogenase (Vibrio campbellii (strain ATCC BAA-1116)).